The primary structure comprises 506 residues: MHLLGLLPRRAWASLLSQLLRPPWASCTGAVRCQSQVAEAVLTSQLKAHQEKPNFIIKTPKGTRDLSPQHMVVREKILDLVISCFKRHGAKGMDTPAFELKETLTEKYGEDSGLMYDLKDQGGELLSLRYDLTVPFARYLAMNKVKKMKRYHVGKVWRRESPTIVQGRYREFCQCDFDIAGQFDPMIPDAECLKIMCEILSGLQLGDFLIKVNDRRIVDGMFAVCGVPESKFRAICSSIDKLDKMAWKDVRHEMVVKKGLAPEVADRIGDYVQCHGGVSLVEQMFQDPRLSQNKQALEGLGDLKLLFEYLTLFGIADKISFDLSLARGLDYYTGVIYEAVLLQTPTQAGEEPLNVGSVAAGGRYDGLVGMFDPKGHKVPCVGLSIGVERIFYIVEQRMKTKGEKVRTTETQVFVATPQKNFLQERLKLIAELWNSGIKAEMLYKNNPKLLTQLHYCESTGIPLVVIIGEQELKEGVIKIRSVASREEVAIKRENLVAEIQKRLSES.

A mitochondrion-targeting transit peptide spans 1–33; the sequence is MHLLGLLPRRAWASLLSQLLRPPWASCTGAVRC. Position 67 is a phosphoserine (Ser-67). Residues 131–133, Arg-158, Gln-174, Asp-178, Arg-327, and 331–332 each bind L-histidine; these read DLT and YY. Lys-444 carries the post-translational modification N6-acetyllysine.

The protein belongs to the class-II aminoacyl-tRNA synthetase family. Homodimer.

It is found in the mitochondrion. The enzyme catalyses tRNA(His) + L-histidine + ATP = L-histidyl-tRNA(His) + AMP + diphosphate + H(+). Functionally, mitochondrial aminoacyl-tRNA synthetase that catalyzes the ATP-dependent ligation of histidine to the 3'-end of its cognate tRNA, via the formation of an aminoacyl-adenylate intermediate (His-AMP). This is Histidine--tRNA ligase, mitochondrial (HARS2) from Pongo abelii (Sumatran orangutan).